Here is a 204-residue protein sequence, read N- to C-terminus: Peptide deformylase (204 aa).

Fe cation is bound by residues Cys131 and His174. Glu175 is a catalytic residue. Residue His178 coordinates Fe cation.

The protein belongs to the polypeptide deformylase family. Requires Fe(2+) as cofactor.

The enzyme catalyses N-terminal N-formyl-L-methionyl-[peptide] + H2O = N-terminal L-methionyl-[peptide] + formate. Its function is as follows. Removes the formyl group from the N-terminal Met of newly synthesized proteins. Requires at least a dipeptide for an efficient rate of reaction. N-terminal L-methionine is a prerequisite for activity but the enzyme has broad specificity at other positions. The protein is Peptide deformylase of Streptococcus pyogenes serotype M49 (strain NZ131).